The following is a 530-amino-acid chain: Ankyrin repeat domain-containing protein 53 (530 aa).

The span at Met-1–Ser-15 shows a compositional bias: low complexity. The tract at residues Met-1–Thr-99 is disordered. The span at Pro-32–Lys-41 shows a compositional bias: polar residues. ANK repeat units lie at residues Lys-139–Leu-169, Asn-173–Ala-206, and Asn-210–Ala-239. Disordered stretches follow at residues Gly-323–Arg-360 and Pro-383–His-402. Polar residues-rich tracts occupy residues Leu-326–Thr-341 and Trp-386–His-402.

In terms of assembly, interacts with PSRC1; recruited by PSRC1 to the spindle during mitosis. Post-translationally, phosphorylated during mitosis.

The protein localises to the cytoplasm. It localises to the cytoskeleton. The protein resides in the spindle. Its subcellular location is the spindle pole. Its function is as follows. Required for normal progression through mitosis. Involved in chromosome alignment and cytokinesis via regulation of microtubules polymerization. This is Ankyrin repeat domain-containing protein 53 (ANKRD53) from Homo sapiens (Human).